The sequence spans 341 residues: 4-hydroxy-2-oxovalerate aldolase 2 (341 aa).

The Pyruvate carboxyltransferase domain occupies 8 to 260 (VTVHDMTLRD…ETGVDVAKIT (253 aa)). 16–17 (RD) serves as a coordination point for substrate. Asp-17 provides a ligand contact to Mn(2+). His-20 (proton acceptor) is an active-site residue. 2 residues coordinate substrate: Ser-170 and His-199. The Mn(2+) site is built by His-199 and His-201. Tyr-290 contributes to the substrate binding site.

The protein belongs to the 4-hydroxy-2-oxovalerate aldolase family.

The enzyme catalyses (S)-4-hydroxy-2-oxopentanoate = acetaldehyde + pyruvate. In Dechloromonas aromatica (strain RCB), this protein is 4-hydroxy-2-oxovalerate aldolase 2.